The following is a 147-amino-acid chain: Large ribosomal subunit protein uL15 (147 aa).

The disordered stretch occupies residues 16–63 (SSRARVGRGIGSGLGKTAGRGHKGSFARKGGGKIKPGFEGGQTPMQRR). The span at 23–33 (RGIGSGLGKTA) shows a compositional bias: gly residues. Positions 34 to 47 (GRGHKGSFARKGGG) are enriched in basic residues.

The protein belongs to the universal ribosomal protein uL15 family. In terms of assembly, part of the 50S ribosomal subunit.

Binds to the 23S rRNA. This is Large ribosomal subunit protein uL15 from Xylella fastidiosa (strain Temecula1 / ATCC 700964).